A 207-amino-acid chain; its full sequence is Thymidylate kinase (207 aa).

9 to 16 (GGEGCGKS) is a binding site for ATP.

Belongs to the thymidylate kinase family.

The enzyme catalyses dTMP + ATP = dTDP + ADP. In terms of biological role, phosphorylation of dTMP to form dTDP in both de novo and salvage pathways of dTTP synthesis. The polypeptide is Thymidylate kinase (Dehalococcoides mccartyi (strain ATCC BAA-2266 / KCTC 15142 / 195) (Dehalococcoides ethenogenes (strain 195))).